We begin with the raw amino-acid sequence, 640 residues long: Fructose-1,6-bisphosphatase class 3 (640 aa).

It belongs to the FBPase class 3 family. Mn(2+) is required as a cofactor.

It catalyses the reaction beta-D-fructose 1,6-bisphosphate + H2O = beta-D-fructose 6-phosphate + phosphate. Its pathway is carbohydrate biosynthesis; gluconeogenesis. The protein is Fructose-1,6-bisphosphatase class 3 of Lactococcus lactis subsp. cremoris (strain MG1363).